The following is a 210-amino-acid chain: Peptidyl-tRNA hydrolase (210 aa).

Residue tyrosine 15 coordinates tRNA. Histidine 20 acts as the Proton acceptor in catalysis. Residues phenylalanine 66, asparagine 68, and asparagine 114 each contribute to the tRNA site. The disordered stretch occupies residues 186–210; the sequence is IHTSKPPRPKPPRREPGDGGTPATA.

The protein belongs to the PTH family. As to quaternary structure, monomer.

The protein localises to the cytoplasm. The enzyme catalyses an N-acyl-L-alpha-aminoacyl-tRNA + H2O = an N-acyl-L-amino acid + a tRNA + H(+). Hydrolyzes ribosome-free peptidyl-tRNAs (with 1 or more amino acids incorporated), which drop off the ribosome during protein synthesis, or as a result of ribosome stalling. Functionally, catalyzes the release of premature peptidyl moieties from peptidyl-tRNA molecules trapped in stalled 50S ribosomal subunits, and thus maintains levels of free tRNAs and 50S ribosomes. In Variovorax paradoxus (strain S110), this protein is Peptidyl-tRNA hydrolase.